The primary structure comprises 1342 residues: DNA-directed RNA polymerase subunit beta (1342 aa).

Belongs to the RNA polymerase beta chain family. As to quaternary structure, the RNAP catalytic core consists of 2 alpha, 1 beta, 1 beta' and 1 omega subunit. When a sigma factor is associated with the core the holoenzyme is formed, which can initiate transcription.

The enzyme catalyses RNA(n) + a ribonucleoside 5'-triphosphate = RNA(n+1) + diphosphate. DNA-dependent RNA polymerase catalyzes the transcription of DNA into RNA using the four ribonucleoside triphosphates as substrates. This is DNA-directed RNA polymerase subunit beta from Buchnera aphidicola subsp. Acyrthosiphon pisum (strain 5A).